A 64-amino-acid polypeptide reads, in one-letter code: Large ribosomal subunit protein bL35 (64 aa).

It belongs to the bacterial ribosomal protein bL35 family.

The protein is Large ribosomal subunit protein bL35 of Chlorobium chlorochromatii (strain CaD3).